The following is a 454-amino-acid chain: tRNA modification GTPase MnmE (454 aa).

The (6S)-5-formyl-5,6,7,8-tetrahydrofolate site is built by Arg26, Glu84, and Lys123. The 160-residue stretch at 219–378 folds into the TrmE-type G domain; sequence GLQVVIAGKP…LVDAITAHAG (160 aa). Asn229 is a binding site for K(+). GTP-binding positions include 229–234, 248–254, and 273–276; these read NAGKSS, TDIAGTT, and DTAG. Ser233 is a binding site for Mg(2+). 3 residues coordinate K(+): Thr248, Ile250, and Thr253. Thr254 serves as a coordination point for Mg(2+). Lys454 serves as a coordination point for (6S)-5-formyl-5,6,7,8-tetrahydrofolate.

This sequence belongs to the TRAFAC class TrmE-Era-EngA-EngB-Septin-like GTPase superfamily. TrmE GTPase family. Homodimer. Heterotetramer of two MnmE and two MnmG subunits. K(+) is required as a cofactor.

Its subcellular location is the cytoplasm. In terms of biological role, exhibits a very high intrinsic GTPase hydrolysis rate. Involved in the addition of a carboxymethylaminomethyl (cmnm) group at the wobble position (U34) of certain tRNAs, forming tRNA-cmnm(5)s(2)U34. This Acinetobacter baumannii (strain AYE) protein is tRNA modification GTPase MnmE.